The sequence spans 548 residues: NAD(P)H-quinone oxidoreductase chain 4 (548 aa).

14 consecutive transmembrane segments (helical) span residues 17–37 (VPWLSLSILVPIGGALLIPFI), 48–68 (WYALIVTLITFLITVAAYLTG), 103–123 (LILLTSFITSLACLAAWPVTF), 127–147 (LFFFLLLAMDGGQIAVFAVQD), 149–169 (LLFFLAWELELLPVYLLLAIW), 181–201 (FILYTAGSSLFILLAALAMGF), 222–242 (GFQLLCYAGLLIAFGVKLPIV), 256–276 (TAPVHMLLAGILLKMGGYALL), 290–310 (FAPLLIVLGVVNIIYAALTSF), 327–347 (MGFVLIGIGSFSVLGSSGAML), 348–368 (QMISHGLIGASLFFLVGATYD), 389–409 (FALWTVCALASLALPGMSGFV), 430–450 (VVICGLAAVGVVLTPVYLLSM), and 477–497 (VYIIGCLLVPIIGIGLYPRLM).

This sequence belongs to the complex I subunit 4 family.

It localises to the cellular thylakoid membrane. It catalyses the reaction a plastoquinone + NADH + (n+1) H(+)(in) = a plastoquinol + NAD(+) + n H(+)(out). The catalysed reaction is a plastoquinone + NADPH + (n+1) H(+)(in) = a plastoquinol + NADP(+) + n H(+)(out). Functionally, NDH-1 shuttles electrons from NAD(P)H, via FMN and iron-sulfur (Fe-S) centers, to quinones in the respiratory chain. The immediate electron acceptor for the enzyme in this species is believed to be plastoquinone. Couples the redox reaction to proton translocation (for every two electrons transferred, four hydrogen ions are translocated across the cytoplasmic membrane), and thus conserves the redox energy in a proton gradient. The polypeptide is NAD(P)H-quinone oxidoreductase chain 4 (Synechococcus sp. (strain CC9902)).